Consider the following 170-residue polypeptide: Adenine phosphoribosyltransferase (170 aa).

This sequence belongs to the purine/pyrimidine phosphoribosyltransferase family. Homodimer.

The protein localises to the cytoplasm. The catalysed reaction is AMP + diphosphate = 5-phospho-alpha-D-ribose 1-diphosphate + adenine. Its pathway is purine metabolism; AMP biosynthesis via salvage pathway; AMP from adenine: step 1/1. Functionally, catalyzes a salvage reaction resulting in the formation of AMP, that is energically less costly than de novo synthesis. In Mycoplasmopsis agalactiae (strain NCTC 10123 / CIP 59.7 / PG2) (Mycoplasma agalactiae), this protein is Adenine phosphoribosyltransferase.